The following is a 231-amino-acid chain: Orotidine 5'-phosphate decarboxylase (231 aa).

Residues aspartate 12, lysine 34, 61–70 (DMKLLDIDNT), threonine 116, arginine 177, glutamine 186, glycine 206, and arginine 207 each bind substrate. Lysine 63 serves as the catalytic Proton donor.

Belongs to the OMP decarboxylase family. Type 1 subfamily. Homodimer.

The enzyme catalyses orotidine 5'-phosphate + H(+) = UMP + CO2. Its pathway is pyrimidine metabolism; UMP biosynthesis via de novo pathway; UMP from orotate: step 2/2. Catalyzes the decarboxylation of orotidine 5'-monophosphate (OMP) to uridine 5'-monophosphate (UMP). In Allorhizobium ampelinum (strain ATCC BAA-846 / DSM 112012 / S4) (Agrobacterium vitis (strain S4)), this protein is Orotidine 5'-phosphate decarboxylase.